Reading from the N-terminus, the 158-residue chain is NAD(P)H-quinone oxidoreductase subunit N (158 aa).

Belongs to the complex I NdhN subunit family. In terms of assembly, NDH-1 can be composed of about 15 different subunits; different subcomplexes with different compositions have been identified which probably have different functions.

The protein resides in the cellular thylakoid membrane. It carries out the reaction a plastoquinone + NADH + (n+1) H(+)(in) = a plastoquinol + NAD(+) + n H(+)(out). It catalyses the reaction a plastoquinone + NADPH + (n+1) H(+)(in) = a plastoquinol + NADP(+) + n H(+)(out). NDH-1 shuttles electrons from an unknown electron donor, via FMN and iron-sulfur (Fe-S) centers, to quinones in the respiratory and/or the photosynthetic chain. The immediate electron acceptor for the enzyme in this species is believed to be plastoquinone. Couples the redox reaction to proton translocation, and thus conserves the redox energy in a proton gradient. Cyanobacterial NDH-1 also plays a role in inorganic carbon-concentration. This Gloeothece citriformis (strain PCC 7424) (Cyanothece sp. (strain PCC 7424)) protein is NAD(P)H-quinone oxidoreductase subunit N.